We begin with the raw amino-acid sequence, 323 residues long: Prenyl transferase (323 aa).

Residues lysine 46, arginine 49, and histidine 81 each contribute to the isopentenyl diphosphate site. Mg(2+)-binding residues include aspartate 88 and aspartate 92. Arginine 97 contributes to the an all-trans-polyprenyl diphosphate binding site. Arginine 98 lines the isopentenyl diphosphate pocket. The an all-trans-polyprenyl diphosphate site is built by lysine 174, threonine 175, and glutamine 212.

The protein belongs to the FPP/GGPP synthase family. The cofactor is Mg(2+).

Its subcellular location is the plastid. It is found in the chloroplast. Functionally, possible role in synthesis of the nonaprenyl side chain of plastoquinone or in synthesis of other prenyl chains such as undekaprenyl pyrophosphate. This Porphyra purpurea (Red seaweed) protein is Prenyl transferase (preA).